We begin with the raw amino-acid sequence, 199 residues long: Recombination protein RecR (199 aa).

The C4-type zinc finger occupies 58–73 (CKKCFNFTSEDECEIC). Residues 81–175 (KLICVVAETK…KVTRIAYGLP (95 aa)) form the Toprim domain.

Belongs to the RecR family.

Its function is as follows. May play a role in DNA repair. It seems to be involved in an RecBC-independent recombinational process of DNA repair. It may act with RecF and RecO. The sequence is that of Recombination protein RecR from Prochlorococcus marinus (strain MIT 9312).